The primary structure comprises 188 residues: Elongation factor P (188 aa).

Lysine 34 is subject to N6-(3,6-diaminohexanoyl)-5-hydroxylysine.

The protein belongs to the elongation factor P family. Post-translationally, may be beta-lysylated on the epsilon-amino group of Lys-34 by the combined action of EpmA and EpmB, and then hydroxylated on the C5 position of the same residue by EpmC (if this protein is present). Lysylation is critical for the stimulatory effect of EF-P on peptide-bond formation. The lysylation moiety may extend toward the peptidyltransferase center and stabilize the terminal 3-CCA end of the tRNA. Hydroxylation of the C5 position on Lys-34 may allow additional potential stabilizing hydrogen-bond interactions with the P-tRNA.

It localises to the cytoplasm. It functions in the pathway protein biosynthesis; polypeptide chain elongation. Involved in peptide bond synthesis. Alleviates ribosome stalling that occurs when 3 or more consecutive Pro residues or the sequence PPG is present in a protein, possibly by augmenting the peptidyl transferase activity of the ribosome. Modification of Lys-34 is required for alleviation. This is Elongation factor P from Proteus mirabilis (strain HI4320).